The chain runs to 101 residues: Small ribosomal subunit protein uS14 (101 aa).

Belongs to the universal ribosomal protein uS14 family. Part of the 30S ribosomal subunit. Contacts proteins S3 and S10.

Functionally, binds 16S rRNA, required for the assembly of 30S particles and may also be responsible for determining the conformation of the 16S rRNA at the A site. This Brucella abortus (strain 2308) protein is Small ribosomal subunit protein uS14.